Reading from the N-terminus, the 156-residue chain is Large ribosomal subunit protein uL15 (156 aa).

Residues 1-44 (MKLNELRDNPGASPKRTRVGRGPGSGKGKMGGRGIKGQKSRSGV) form a disordered region. The segment covering 21 to 35 (RGPGSGKGKMGGRGI) has biased composition (gly residues).

The protein belongs to the universal ribosomal protein uL15 family. Part of the 50S ribosomal subunit.

In terms of biological role, binds to the 23S rRNA. The polypeptide is Large ribosomal subunit protein uL15 (Ruegeria sp. (strain TM1040) (Silicibacter sp.)).